A 1171-amino-acid polypeptide reads, in one-letter code: DNA polymerase catalytic subunit (1171 aa).

Disordered stretches follow at residues 647-687, 704-735, and 1149-1171; these read GTPA…PFRT, PGGG…EPAP, and VEEE…DSSR. Residues 649–662 are compositionally biased toward pro residues; that stretch reads PARPPETPARPPET. Low complexity-rich tracts occupy residues 663–674 and 709–725; these read PAAGPSGAAHAG and VSSA…PSET. Residues 1149 to 1158 show a composition bias toward basic and acidic residues; that stretch reads VEEEVCESER.

Belongs to the DNA polymerase type-B family.

The protein localises to the host nucleus. The enzyme catalyses DNA(n) + a 2'-deoxyribonucleoside 5'-triphosphate = DNA(n+1) + diphosphate. In Tupaia belangeri (Common tree shrew), this protein is DNA polymerase catalytic subunit (DPOL).